We begin with the raw amino-acid sequence, 315 residues long: HTH-type transcriptional regulator TreR (315 aa).

In terms of domain architecture, HTH lacI-type spans 5–59; it reads LTIKDIARLSGVGKSTVSRVLNNESGVSQLTRERVEAVMNQHGFSPSRSARAMRG. The segment at residues 7 to 26 is a DNA-binding region (H-T-H motif); that stretch reads IKDIARLSGVGKSTVSRVLN. Residues 71 to 77, G126, R147, 187 to 190, R194, T242, and Y284 each bind alpha,alpha-trehalose 6-phosphate; these read RLDSLSE and DVTT.

Homodimer.

Repressor of the treBC operon. It is able to bind trehalose-6-phosphate and trehalose. The protein is HTH-type transcriptional regulator TreR (treR) of Escherichia coli (strain K12).